The chain runs to 150 residues: Ribosomal RNA large subunit methyltransferase H (150 aa).

Residues A100 and 118-123 (LSEMTF) contribute to the S-adenosyl-L-methionine site.

It belongs to the RNA methyltransferase RlmH family. Homodimer.

The protein localises to the cytoplasm. The catalysed reaction is pseudouridine(1915) in 23S rRNA + S-adenosyl-L-methionine = N(3)-methylpseudouridine(1915) in 23S rRNA + S-adenosyl-L-homocysteine + H(+). Specifically methylates the pseudouridine at position 1915 (m3Psi1915) in 23S rRNA. This is Ribosomal RNA large subunit methyltransferase H from Helicobacter pylori (strain J99 / ATCC 700824) (Campylobacter pylori J99).